The sequence spans 142 residues: Large ribosomal subunit protein uL11 (142 aa).

It belongs to the universal ribosomal protein uL11 family. In terms of assembly, part of the ribosomal stalk of the 50S ribosomal subunit. Interacts with L10 and the large rRNA to form the base of the stalk. L10 forms an elongated spine to which L12 dimers bind in a sequential fashion forming a multimeric L10(L12)X complex. In terms of processing, one or more lysine residues are methylated.

Functionally, forms part of the ribosomal stalk which helps the ribosome interact with GTP-bound translation factors. The sequence is that of Large ribosomal subunit protein uL11 from Xanthomonas axonopodis pv. citri (strain 306).